The primary structure comprises 556 residues: Melanoma-associated antigen B4 (556 aa).

The segment covering 1 to 15 has biased composition (basic residues); that stretch reads MPRGQKSKARAREKR. The disordered stretch occupies residues 1–110; it reads MPRGQKSKAR…RFSENPQNDL (110 aa). Residues 39–73 show a composition bias toward polar residues; it reads PSCSNQDSGDAVASTSTAGFPQKSKSQGEAPTTTA. The segment covering 77–87 has biased composition (basic residues); that stretch reads GACRRSRKSTR. In terms of domain architecture, MAGE spans 111-310; the sequence is LTRKTGMLMQ…QAFPTHYEEA (200 aa). A disordered region spans residues 315–335; it reads EERAQAEAVGSPGTSAKDKAE. Ser325 carries the phosphoserine modification. 15 tandem repeats follow at residues 334–348, 349–363, 364–378, 379–392, 393–407, 408–421, 422–436, 437–451, 452–466, 467–480, 481–495, 496–510, 511–525, 526–539, and 540–554. Residues 334–554 form a 15 X 15 AA approximate tandem repeats region; that stretch reads AEAKVTLVDS…PLVDSSGKDK (221 aa).

Expressed in testis (at protein level).

The protein localises to the cytoplasm. The sequence is that of Melanoma-associated antigen B4 from Mus musculus (Mouse).